The sequence spans 86 residues: MTLFNSISSISNSTGLSKQSLIVNVDGNTSSSGGNSTSWLGGFDGCGGCGGFGSYGGCRGFGGCGGSNLNIINVDIDIGRRRRRCC.

It belongs to the UPF0512 family.

The polypeptide is UPF0512 protein V (Dictyostelium discoideum (Social amoeba)).